Reading from the N-terminus, the 240-residue chain is Protein RoBo-1 (240 aa).

Residues 1 to 26 (MSWFLVLKCLLTVCIISHLSVSSTES) form the signal peptide. N-linked (GlcNAc...) asparagine glycosylation occurs at Asn-42. Intrachain disulfides connect Cys-47-Cys-76, Cys-81-Cys-102, Cys-103-Cys-108, Cys-127-Cys-151, and Cys-144-Cys-171. N-linked (GlcNAc...) asparagine glycosylation is present at Asn-153.

The protein belongs to the CNF-like-inhibitor family. Post-translationally, N-glycosylated. In terms of tissue distribution, expressed abundantly in bone, including the lengthening growth plate where cartilage is remodeled into bone.

The protein resides in the secreted. In terms of biological role, may play a novel role in the growth or remodeling of bone. This chain is Protein RoBo-1, found in Rattus norvegicus (Rat).